Consider the following 372-residue polypeptide: NAD(P)H-quinone oxidoreductase subunit 1 (372 aa).

8 consecutive transmembrane segments (helical) span residues 27 to 47, 97 to 117, 128 to 148, 166 to 186, 204 to 224, 266 to 286, 308 to 328, and 347 to 367; these read MLWL…GVLV, ILFT…WLIV, VGVG…GLLM, AAQS…VVMM, VLSW…ICAL, VLSA…PIPV, TVGI…AILL, and FLLP…LAFP.

It belongs to the complex I subunit 1 family. NDH-1 is composed of at least 11 different subunits.

Its subcellular location is the cellular thylakoid membrane. The enzyme catalyses a plastoquinone + NADH + (n+1) H(+)(in) = a plastoquinol + NAD(+) + n H(+)(out). The catalysed reaction is a plastoquinone + NADPH + (n+1) H(+)(in) = a plastoquinol + NADP(+) + n H(+)(out). NDH-1 shuttles electrons from an unknown electron donor, via FMN and iron-sulfur (Fe-S) centers, to quinones in the respiratory and/or the photosynthetic chain. The immediate electron acceptor for the enzyme in this species is believed to be plastoquinone. Couples the redox reaction to proton translocation, and thus conserves the redox energy in a proton gradient. The sequence is that of NAD(P)H-quinone oxidoreductase subunit 1 from Synechococcus sp. (strain CC9311).